A 355-amino-acid polypeptide reads, in one-letter code: Cyclic nucleotide-gated potassium channel mll3241 (355 aa).

The Cytoplasmic portion of the chain corresponds to 1–12 (MSVLPFLRIYAP). Residues 13 to 30 (LNAVLAAPGLLAVAALTI) traverse the membrane as a helical segment. Over 31 to 38 (PDMSGRSR) the chain is Periplasmic. Residues 39-61 (LALAALLAVIWGAYLLQLAATLL) traverse the membrane as a helical segment. The Cytoplasmic portion of the chain corresponds to 62 to 74 (KRRAGVVRDRTPK). The helical transmembrane segment at 75 to 94 (IAIDVLAVLVPLAAFLLDGS) threads the bilayer. Residues 95-112 (PDWSLYCAVWLLKPLRDS) form a helical membrane-spanning segment. The Cytoplasmic segment spans residues 113-129 (TFFPVLGRVLANEARNL). A helical membrane pass occupies residues 130 to 150 (IGVTTLFGVVLFAVALAAYVI). Residues 151-161 (ERDIQPEKFGS) lie on the Periplasmic side of the membrane. Positions 162–180 (IPQAMWWAVVTLSTTGYGD) form an intramembrane region, pore-forming. A Selectivity filter motif is present at residues 175 to 180 (TTGYGD). Over 181-185 (TIPQS) the chain is Periplasmic. The helical transmembrane segment at 186–210 (FAGRVLAGAVMMSGIGIFGLWAGIL) threads the bilayer. Over 211-355 (ATGFYQEVRR…LERRGAAASA (145 aa)) the chain is Cytoplasmic. 3',5'-cyclic AMP-binding positions include 297 to 298 (GE), 307 to 308 (RS), and Arg-348.

Belongs to the potassium channel family. In terms of assembly, homotetramer.

The protein localises to the cell membrane. Functionally, cyclic nucleotide-regulated potassium channel activated by cAMP. The chain is Cyclic nucleotide-gated potassium channel mll3241 from Mesorhizobium japonicum (strain LMG 29417 / CECT 9101 / MAFF 303099) (Mesorhizobium loti (strain MAFF 303099)).